The primary structure comprises 98 residues: ATP synthase subunit alpha, chloroplastic (98 aa).

The protein belongs to the ATPase alpha/beta chains family. As to quaternary structure, F-type ATPases have 2 components, CF(1) - the catalytic core - and CF(0) - the membrane proton channel. CF(1) has five subunits: alpha(3), beta(3), gamma(1), delta(1), epsilon(1). CF(0) has four main subunits: a, b, b' and c.

The protein localises to the plastid. It is found in the chloroplast thylakoid membrane. The catalysed reaction is ATP + H2O + 4 H(+)(in) = ADP + phosphate + 5 H(+)(out). Its function is as follows. Produces ATP from ADP in the presence of a proton gradient across the membrane. The alpha chain is a regulatory subunit. The chain is ATP synthase subunit alpha, chloroplastic (atpA) from Populus euphratica (Euphrates poplar).